Reading from the N-terminus, the 599-residue chain is MLELWGVLSLTSLGVMVIFLFSKIKSSFAESVKYAGYMNAVLLSILLMSDESEMLFLKWEWVKLGGYSLMISFRFDLYTCCFFVVGLYVTWNILMFSFYYMSTDPRIDLFCKYLGLFLIAMLLLVSAESLFQLLIGWEGVGIMSYLLISWWYARSDANTAALQAIFYNRVGDIGLLIMLMWSLVTLGDWSFTGLYALDFVNTFFLLGVVLAAAGKSAQLGLHPWLPAAMEGPTPVSSLLHSSTMVVAGVFLLIRFSPIILNHKEIQLMVFFLGTMTTLFSAICALAQNDMKKVVAFSTASQLGLMVTVVAGAGAPQLAFLHICMHAFFKAMLFMCSGGFIHGLQNEQDVRKMGGLHSAAPITSVCFFIGSAALMGVPFLAGFFSKDPIIEIININNLNSWAVGLVLIATSFTAAYSVRLLYFSVGGVSRMLVLQPMNEEYGNLIGPLQRLAYSSVIAGVVFIYFLSPNQISCLSLPLSLKLAAVFVTLVGGLIAWDVVNLLHREESVTNIPELAFEAQVGFYPLIMHKLIPKVWLNMGEMYQMQVMDRGWTELALPQGLGGNYKIMADNVVNAQTSLIKMYIAVMVMMGGLILGIMICL.

The next 16 membrane-spanning stretches (helical) occupy residues 1-21 (MLEL…IFLF), 28-48 (FAES…ILLM), 81-101 (CFFV…FYYM), 115-135 (GLFL…QLLI), 171-191 (GDIG…DWSF), 193-213 (GLYA…LAAA), 233-253 (TPVS…FLLI), 265-285 (IQLM…ICAL), 302-322 (LGLM…FLHI), 323-343 (CMHA…IHGL), 363-383 (SVCF…AGFF), 398-420 (NSWA…VRLL), 455-475 (VIAG…CLSL), 481-501 (LAAV…VNLL), 510-530 (IPEL…HKLI), and 577-597 (LIKM…GIMI).

This sequence belongs to the complex I subunit 5 family.

Its subcellular location is the mitochondrion inner membrane. It carries out the reaction a ubiquinone + NADH + 5 H(+)(in) = a ubiquinol + NAD(+) + 4 H(+)(out). Core subunit of the mitochondrial membrane respiratory chain NADH dehydrogenase (Complex I) that is believed to belong to the minimal assembly required for catalysis. Complex I functions in the transfer of electrons from NADH to the respiratory chain. The immediate electron acceptor for the enzyme is believed to be ubiquinone. The chain is NADH-ubiquinone oxidoreductase chain 5 (ND5) from Branchiostoma floridae (Florida lancelet).